We begin with the raw amino-acid sequence, 37 residues long: Protein 6.3 (37 aa).

The protein is Protein 6.3 of Escherichia phage T7 (Bacteriophage T7).